We begin with the raw amino-acid sequence, 377 residues long: tRNA-specific 2-thiouridylase MnmA (377 aa).

Residues 16–23 and Met-42 contribute to the ATP site; that span reads GMSGGVDS. Residues 102-104 form an interaction with target base in tRNA region; sequence NPD. Cys-107 (nucleophile) is an active-site residue. Cys-107 and Cys-204 are disulfide-bonded. Gly-131 contacts ATP. The interval 154-156 is interaction with tRNA; it reads KDQ. The active-site Cysteine persulfide intermediate is Cys-204. The segment at 315-316 is interaction with tRNA; it reads RY.

It belongs to the MnmA/TRMU family.

It is found in the cytoplasm. It catalyses the reaction S-sulfanyl-L-cysteinyl-[protein] + uridine(34) in tRNA + AH2 + ATP = 2-thiouridine(34) in tRNA + L-cysteinyl-[protein] + A + AMP + diphosphate + H(+). Functionally, catalyzes the 2-thiolation of uridine at the wobble position (U34) of tRNA, leading to the formation of s(2)U34. The sequence is that of tRNA-specific 2-thiouridylase MnmA from Lacticaseibacillus paracasei (strain ATCC 334 / BCRC 17002 / CCUG 31169 / CIP 107868 / KCTC 3260 / NRRL B-441) (Lactobacillus paracasei).